We begin with the raw amino-acid sequence, 87 residues long: Large ribosomal subunit protein bL31B (87 aa).

This sequence belongs to the bacterial ribosomal protein bL31 family. Type B subfamily. In terms of assembly, part of the 50S ribosomal subunit.

This Escherichia coli O8 (strain IAI1) protein is Large ribosomal subunit protein bL31B.